A 572-amino-acid chain; its full sequence is MGQSTSKEHENARTNESKLKGESLMDFFNDRCLKQLTTAELISFKNNIPEGKELNDYVEVSDISRMYYIPKDSAVMLSVFMNMFHTLANFPLLQDSYEKVTFKTLLKATLLLVKERAIKYTDWKKYNDLKMLFITLSLEKNIKAEPLMDSSALSDCKDWKGVIRSYNGTDFDELKVNANNLLHFLALILALSRCCILNNCKIDNDVLAKSLEDFKHQALNIVRTMNPEIISMSDCLDSSITYTQFSMAVNDVAPNLLNPLKMLMEHVLYMDRDLVDADVLQPISNPTKIVNESELSQLATFLPKEIVFSRFQKLYVGRESGFSMRSFQSKVFKWMAPTILFVEGMRIRDEDDEDGDAYAVKNPRYRNFLQEYGKLKSEDQHLDTLSKKKRKLLFAVCIRDPWKVSNKDLFGDSSTKIIQLHPRQEIFDADPFKTGNVYFNTVGGGIGIGSSQPIIKANGKKYFPGNVSLTIDSSLEFGIFRHLGAGGSFKPGRLISGRGEERNSFEYRFIIQDVEVWGCGGEKELEEQVKQWQWEEAEAKRRQKINLQSMGEDRALLEMAGLVGQHQSGGSI.

One can recognise a TLDc domain in the interval 288–520 (KIVNESELSQ…IQDVEVWGCG (233 aa)).

This sequence belongs to the RTC5 family.

The protein resides in the cytoplasm. Its function is as follows. May be involved in a process influencing telomere capping. The chain is Restriction of telomere capping protein 5 (RTC5) from Kluyveromyces lactis (strain ATCC 8585 / CBS 2359 / DSM 70799 / NBRC 1267 / NRRL Y-1140 / WM37) (Yeast).